The primary structure comprises 67 residues: Large ribosomal subunit protein uL29 (67 aa).

Belongs to the universal ribosomal protein uL29 family.

This Wolbachia pipientis wMel protein is Large ribosomal subunit protein uL29.